The following is a 127-amino-acid chain: uncharacterized protein (127 aa).

A disordered region spans residues 69–94 (GDGGSVPEKGKHGILGAQGQEHPGLN).

This is an uncharacterized protein from Homo sapiens (Human).